The following is an 868-amino-acid chain: Leucine--tRNA ligase (868 aa).

A 'HIGH' region motif is present at residues 42–52 (PYPSGKLHMGH). A 'KMSKS' region motif is present at residues 627–631 (KMSKS). Lysine 630 lines the ATP pocket.

Belongs to the class-I aminoacyl-tRNA synthetase family.

The protein resides in the cytoplasm. It catalyses the reaction tRNA(Leu) + L-leucine + ATP = L-leucyl-tRNA(Leu) + AMP + diphosphate. This chain is Leucine--tRNA ligase, found in Pseudomonas syringae pv. syringae (strain B728a).